Here is a 384-residue protein sequence, read N- to C-terminus: Homoserine O-succinyltransferase (384 aa).

An AB hydrolase-1 domain is found at 51 to 361 (NAILICHALS…ETSQGHDAFL (311 aa)). Serine 157 (nucleophile) is an active-site residue. Position 227 (arginine 227) interacts with substrate. Active-site residues include aspartate 324 and histidine 357. Aspartate 358 contributes to the substrate binding site.

It belongs to the AB hydrolase superfamily. MetX family. In terms of assembly, homodimer.

Its subcellular location is the cytoplasm. It carries out the reaction L-homoserine + succinyl-CoA = O-succinyl-L-homoserine + CoA. It participates in amino-acid biosynthesis; L-methionine biosynthesis via de novo pathway; O-succinyl-L-homoserine from L-homoserine: step 1/1. Its function is as follows. Transfers a succinyl group from succinyl-CoA to L-homoserine, forming succinyl-L-homoserine. This is Homoserine O-succinyltransferase from Alkalilimnicola ehrlichii (strain ATCC BAA-1101 / DSM 17681 / MLHE-1).